Reading from the N-terminus, the 302-residue chain is Putative S-adenosyl-L-methionine-dependent methyltransferase MMAR_1068 (302 aa).

S-adenosyl-L-methionine-binding positions include Asp-127 and 156–157; that span reads DL.

It belongs to the UPF0677 family.

Exhibits S-adenosyl-L-methionine-dependent methyltransferase activity. This is Putative S-adenosyl-L-methionine-dependent methyltransferase MMAR_1068 from Mycobacterium marinum (strain ATCC BAA-535 / M).